Here is a 240-residue protein sequence, read N- to C-terminus: Citrate synthase-lysine N-methyltransferase CSKMT, mitochondrial (240 aa).

The N-terminal 28 residues, Met1–Ser28, are a transit peptide targeting the mitochondrion.

This sequence belongs to the methyltransferase superfamily.

It is found in the mitochondrion. The enzyme catalyses L-lysyl-[citrate synthase] + S-adenosyl-L-methionine = N(6)-methyl-L-lysyl-[citrate synthase] + S-adenosyl-L-homocysteine + H(+). The catalysed reaction is N(6)-methyl-L-lysyl-[citrate synthase] + S-adenosyl-L-methionine = N(6),N(6)-dimethyl-L-lysyl-[citrate synthase] + S-adenosyl-L-homocysteine + H(+). It carries out the reaction N(6),N(6)-dimethyl-L-lysyl-[citrate synthase] + S-adenosyl-L-methionine = N(6),N(6),N(6)-trimethyl-L-lysyl-[citrate synthase] + S-adenosyl-L-homocysteine + H(+). With respect to regulation, citrate synthase-lysine methyltransferase activity is inhibited by S-adenosylhomocysteine (AdoHcy) and oxaloacetate (OAA). Its function is as follows. Protein-lysine methyltransferase that selectively trimethylates citrate synthase (CS) in mitochondria. Seems to conduct trimethylation in a highly distributive manner rather than in a processive manner, and thus introduces a single methyl group per binding event. In Homo sapiens (Human), this protein is Citrate synthase-lysine N-methyltransferase CSKMT, mitochondrial.